The sequence spans 699 residues: TPR repeat-containing thioredoxin TTL1 (699 aa).

The segment at 1–211 (MPKSVKPISE…SSSRSSSTVA (211 aa)) is disordered. Basic and acidic residues predominate over residues 9 to 20 (SESDKLSDHLRD). 2 positions are modified to phosphoserine: S39 and S42. 2 stretches are compositionally biased toward low complexity: residues 52-70 (TTTT…SSGS) and 83-135 (RSNS…TSPA). Gly residues predominate over residues 166–182 (SGTGTYGHGSIMRGGGI). The segment covering 195-210 (NSPVNVGSSSRSSSTV) has biased composition (low complexity). 7 TPR repeats span residues 227–260 (SEEV…SPTN), 262–294 (AYRS…DPNY), 296–328 (RAHH…SDPM), 419–452 (AYIY…DPRC), 465–498 (VARA…DPCN), 499–532 (AILY…QPSY), and 534–566 (KPLL…LPHD). Residues 605–691 (QFKSAMNLPG…IVCPSKEVLE (87 aa)) form the Thioredoxin domain.

Expressed in the root elongation zone, stele, root cap, embryo vascular system, leaf axilar buds, silique abscission zone and guard cells.

Its function is as follows. Involved in responses to osmotic stress and abscisic acid (ABA). May act as a positive regulator of ABA signaling during germination and seedling development under stress. The protein is TPR repeat-containing thioredoxin TTL1 (TTL1) of Arabidopsis thaliana (Mouse-ear cress).